The chain runs to 239 residues: 1-(5-phosphoribosyl)-5-[(5-phosphoribosylamino)methylideneamino] imidazole-4-carboxamide isomerase (239 aa).

D8 acts as the Proton acceptor in catalysis. The Proton donor role is filled by D129.

Belongs to the HisA/HisF family.

It localises to the cytoplasm. It carries out the reaction 1-(5-phospho-beta-D-ribosyl)-5-[(5-phospho-beta-D-ribosylamino)methylideneamino]imidazole-4-carboxamide = 5-[(5-phospho-1-deoxy-D-ribulos-1-ylimino)methylamino]-1-(5-phospho-beta-D-ribosyl)imidazole-4-carboxamide. It participates in amino-acid biosynthesis; L-histidine biosynthesis; L-histidine from 5-phospho-alpha-D-ribose 1-diphosphate: step 4/9. This Paramagnetospirillum magneticum (strain ATCC 700264 / AMB-1) (Magnetospirillum magneticum) protein is 1-(5-phosphoribosyl)-5-[(5-phosphoribosylamino)methylideneamino] imidazole-4-carboxamide isomerase.